The chain runs to 315 residues: Lipoyl synthase (315 aa).

The disordered stretch occupies residues 1 to 33; the sequence is MADMPPVLRHPEKAHRPDQPQPKKPDWIRVKAP. Basic and acidic residues predominate over residues 9–29; the sequence is RHPEKAHRPDQPQPKKPDWIR. The [4Fe-4S] cluster site is built by cysteine 54, cysteine 59, cysteine 65, cysteine 80, cysteine 84, cysteine 87, and serine 294. Residues 66–283 enclose the Radical SAM core domain; that stretch reads WSQGHATMMI…EKAAYGKGFL (218 aa).

It belongs to the radical SAM superfamily. Lipoyl synthase family. The cofactor is [4Fe-4S] cluster.

The protein localises to the cytoplasm. It carries out the reaction [[Fe-S] cluster scaffold protein carrying a second [4Fe-4S](2+) cluster] + N(6)-octanoyl-L-lysyl-[protein] + 2 oxidized [2Fe-2S]-[ferredoxin] + 2 S-adenosyl-L-methionine + 4 H(+) = [[Fe-S] cluster scaffold protein] + N(6)-[(R)-dihydrolipoyl]-L-lysyl-[protein] + 4 Fe(3+) + 2 hydrogen sulfide + 2 5'-deoxyadenosine + 2 L-methionine + 2 reduced [2Fe-2S]-[ferredoxin]. It participates in protein modification; protein lipoylation via endogenous pathway; protein N(6)-(lipoyl)lysine from octanoyl-[acyl-carrier-protein]: step 2/2. In terms of biological role, catalyzes the radical-mediated insertion of two sulfur atoms into the C-6 and C-8 positions of the octanoyl moiety bound to the lipoyl domains of lipoate-dependent enzymes, thereby converting the octanoylated domains into lipoylated derivatives. The chain is Lipoyl synthase from Paracoccus denitrificans (strain Pd 1222).